A 173-amino-acid polypeptide reads, in one-letter code: Alkyl hydroperoxide reductase AhpD (173 aa).

C131 functions as the Proton donor in the catalytic mechanism. Cysteines 131 and 134 form a disulfide. C134 acts as the Cysteine sulfenic acid (-SOH) intermediate in catalysis.

Belongs to the AhpD family.

The enzyme catalyses N(6)-[(R)-dihydrolipoyl]-L-lysyl-[lipoyl-carrier protein] + a hydroperoxide = N(6)-[(R)-lipoyl]-L-lysyl-[lipoyl-carrier protein] + an alcohol + H2O. Antioxidant protein with alkyl hydroperoxidase activity. Required for the reduction of the AhpC active site cysteine residues and for the regeneration of the AhpC enzyme activity. The protein is Alkyl hydroperoxide reductase AhpD of Rhizorhabdus wittichii (strain DSM 6014 / CCUG 31198 / JCM 15750 / NBRC 105917 / EY 4224 / RW1) (Sphingomonas wittichii).